A 333-amino-acid polypeptide reads, in one-letter code: Cap-specific mRNA (nucleoside-2'-O-)-methyltransferase (333 aa).

An mRNA-binding site is contributed by Tyr22. Positions 39, 66, 68, 72, 95, 97, 116, and 138 each coordinate S-adenosyl-L-methionine. Positions 169–249 are binding to NPH-I; the sequence is PVASSLKWRC…NKIVRNKVVV (81 aa). Residues 169–333 are binding to Rap94; the sequence is PVASSLKWRC…NSKRSVRGNK (165 aa). The For methyltransferase activity role is filled by Lys175. Residues 177–180, Asp182, 205–207, and Glu233 contribute to the mRNA site; these read RCPF and SAE.

This sequence belongs to the class I-like SAM-binding methyltransferase superfamily. Poxvirus/kinetoplastid 2'-O-MTase family. In terms of assembly, interacts with poly(A) polymerase catalytic subunit OPG063. Interacts with OPG109 and OPG123; these interactions might help linking transcription to capping and polyadenylation.

Its subcellular location is the virion. The catalysed reaction is a 5'-end (N(7)-methyl 5'-triphosphoguanosine)-ribonucleoside in mRNA + S-adenosyl-L-methionine = a 5'-end (N(7)-methyl 5'-triphosphoguanosine)-(2'-O-methyl-ribonucleoside) in mRNA + S-adenosyl-L-homocysteine + H(+). Displays methyltransferase, positive regulation of the poly(A) polymerase and transcription elongation activities. Involved in the modification of both mRNA ends and in intermediate and late gene positive transcription elongation. At the mRNAs 5' end, methylates the ribose 2' OH group of the first transcribed nucleotide, thereby producing a 2'-O-methylpurine cap. At the 3' end, functions as a processivity factor which stimulates the activity of the viral poly(A) polymerase OPG063 that creates mRNA's poly(A) tail. In the presence of OPG102, OPG063 does not dissociate from the RNA allowing tail elongation to around 250 adenylates. The sequence is that of Cap-specific mRNA (nucleoside-2'-O-)-methyltransferase (OPG102) from Homo sapiens (Human).